The chain runs to 171 residues: I (171 aa).

Disordered stretches follow at residues 57–100 and 143–171; these read IQYP…LFAQ and PRTS…KRRA. A compositionally biased stretch (basic and acidic residues) spans 151–162; it reads EFKRGGGRERLP.

This sequence belongs to the Orthorubulavirus I protein family.

In Mumps virus genotype N (strain L-Zagreb vaccine) (MuV), this protein is I.